The primary structure comprises 608 residues: Putative pentatricopeptide repeat-containing protein At1g16830 (608 aa).

PPR repeat units follow at residues 107 to 141, 142 to 172, 173 to 210, 211 to 245, 246 to 280, 281 to 315, 316 to 350, 351 to 381, 383 to 417, 418 to 452, 453 to 487, 488 to 522, and 523 to 557; these read KPRV…GFVP, NTRA…IRFR, NFFS…GFYP, NRER…GISV, SVNV…GCSP, NLVT…GLAP, DIVL…KLVP, DQYT…IGTD, DLVT…DFAL, DCYT…KKHL, DAHF…KYPL, DVVS…GIYP, and NRRT…GVEL.

It belongs to the PPR family. P subfamily.

The polypeptide is Putative pentatricopeptide repeat-containing protein At1g16830 (Arabidopsis thaliana (Mouse-ear cress)).